Consider the following 507-residue polypeptide: MVNIRPDEISNVIRTRIEQYNQEVKVVNTGTVPQVGDGIARIYGLDKVMAGELVKFEDGTVGIAPNSESDNVGVVLMGDGLTIQEGSSVKATGQIAQIPVSEAYLGRVVNALAQPIDGKGKIPASESRLIESPAPGIISRRSVYEPMQTGLIAIDSMIPIGRGQRELIIGDRQTGKTAVATDTILNQKGQDVICIYVAIGQKASSVAQVVNTFEERGALKYTIVVTENANSPATLQYLAPYTGAALAEYFMYRKQHTLIVYDDLSKQAQAYRQMSLLLRRPPGREAYPGDVFYLHSRLLERAAKSNSQLGEGSMTAPPIIETQAGDVSAYIPTNVISITDGQIFLSADLFNAGIRPAINVGISVSRVGSAAQIRAMKQVAGKLKLELAQFAELEAFAQFASDLDKATQNQLARGQRLRELLKQSQSAPLGVEEQVATIHTGVNGYSDILETGQVKKFLVQLREYLPTNKPQFAEIIRSTKIFTEEAENILKEAIREHSELFSSRESK.

Residue Gly170–Thr177 coordinates ATP.

It belongs to the ATPase alpha/beta chains family. F-type ATPases have 2 components, CF(1) - the catalytic core - and CF(0) - the membrane proton channel. CF(1) has five subunits: alpha(3), beta(3), gamma(1), delta(1), epsilon(1). CF(0) has four main subunits: a, b, b' and c.

The protein localises to the plastid membrane. It carries out the reaction ATP + H2O + 4 H(+)(in) = ADP + phosphate + 5 H(+)(out). Produces ATP from ADP in the presence of a proton gradient across the membrane. The alpha chain is a regulatory subunit. The sequence is that of ATP synthase subunit alpha, plastid from Aneura mirabilis (Parasitic liverwort).